Reading from the N-terminus, the 7760-residue chain is Malpinin synthetase (7760 aa).

Disordered stretches follow at residues 42-115 (ENPE…VNEK) and 161-180 (LDLPTDRPRPSHPSFEGDRV). Over residues 65 to 79 (TPRSASPLSSYTGSP) the composition is skewed to polar residues. Residues 87-389 (TELSRTLSGD…LSLDERTFLL (303 aa)) form a condensation 1 region. Positions 164–180 (PTDRPRPSHPSFEGDRV) are enriched in basic and acidic residues. Residues 409-813 (FEQQAERRPH…GRNDHQVKIR (405 aa)) are adenylation 1. Residues 926–1000 (PPQGELETAI…AFAHAIGQHR (75 aa)) form the Carrier 1 domain. Position 961 is an O-(pantetheine 4'-phosphoryl)serine (Ser-961). A dual epimerase/condensation (E/C) domain 1 region spans residues 1046–1477 (QDIYALAPLQ…VLPADERKLL (432 aa)). Positions 1498-1893 (FEQYADRVPN…GRTDYQVKIR (396 aa)) are adenylation 2. Residues 2003-2077 (APEGEVENAI…ALAQSIGEHR (75 aa)) enclose the Carrier 2 domain. Position 2038 is an O-(pantetheine 4'-phosphoryl)serine (Ser-2038). Residues 2099 to 2558 (PLIDLNQNDI…LPTEERQLLT (460 aa)) form a dual epimerase/condensation (E/C) domain 2 region. The adenylation 3 stretch occupies residues 2578-2973 (FEQHVDRAPD…GRADFQVKIR (396 aa)). Positions 3083–3157 (APQGAVEAAI…ALAQSIGEHR (75 aa)) constitute a Carrier 3 domain. At Ser-3118 the chain carries O-(pantetheine 4'-phosphoryl)serine. Residues 3203–3634 (QDIYALAPLQ…HLNVLPAEER (432 aa)) are dual epimerase/condensation (E/C) domain 3. The interval 3658–4057 (FEQQAERTPD…GRNDDQIKIR (400 aa)) is adenylation 4. Positions 4174–4248 (APQGEVETAL…AFASRVQEQL (75 aa)) constitute a Carrier 4 domain. An O-(pantetheine 4'-phosphoryl)serine modification is found at Ser-4209. The interval 4267 to 4705 (LPLSFAQQRL…AAEILSQDER (439 aa)) is condensation 2. The adenylation 5 stretch occupies residues 4729–5133 (FEQRVESTPD…GRNDHQVKIR (405 aa)). A Carrier 5 domain is found at 5250–5324 (APEGEVETAI…VFAASIGHHQ (75 aa)). Ser-5285 carries the O-(pantetheine 4'-phosphoryl)serine modification. Residues 5370–5804 (QDIYSLSPLQ…VLPAEERTLL (435 aa)) are dual dehydration/condensation (C*) domain. The segment at 5825 to 6224 (FEQQSERTPE…GRNDDQVKIR (400 aa)) is adenylation 6. In terms of domain architecture, Carrier 6 spans 6338-6412 (APQGEVETAL…ALAQSIGQHH (75 aa)). Ser-6373 bears the O-(pantetheine 4'-phosphoryl)serine mark. Positions 6458–6890 (QDIYALSPLQ…QLDTVPAEEH (433 aa)) are dual epimerase/condensation (E/C) domain 4. The adenylation 7 stretch occupies residues 6914–7300 (FEHQVERTPA…KFLPDGNVVC (387 aa)). The region spanning 7428 to 7503 (EPRGAIENIL…ELAPRLLATG (76 aa)) is the Carrier 7 domain. Ser-7463 is subject to O-(pantetheine 4'-phosphoryl)serine. The segment at 7561–7722 (DNGNMASSLD…KPYVQGSIEV (162 aa)) is thioesterase (TE) domain.

Belongs to the NRP synthetase family.

Its function is as follows. Heptamodular nonribosomal peptide synthetase that catalyzes the biosynthesis of malpinins, natural products that show biosurfactant activities. Malpinins are acetylated hexapeptides (Ac-D-Leu/Val-D-Arg-D-Leu/Val-L-Phe/Leu-Dhb-D-Trp) containing a non-canonical amino acid derived from dehydration of L-Trp, (Z)-dehydrobutyrine (Dhb), at position 5, as well as a C-terminal D-amino acid, D-tryptophan, that can be oxidized to kynurenine. Incorporated D-amino acids in positions 1, 3 and 4 are variable resulting in the malpinin A-congeners malpinin B to E. Both modules M1 and M3 have relaxed specificity towards aliphatic amino acids (L-Leu &gt; L-Met &gt; L/D-Val &gt; L-Cys), explaining Val at position 1 and 3 in malpinin A-congeners malpinin B to D. The incorporation of L-Leu, but not N-acetyl-L-Leu by module 1 suggests the N-terminal acetylation occurs at a later stage of biosynthesis. Similar to M1 and M3, M4 has a broad substrate spectrum showing the highest activity with L-Phe followed by other hydrophobic amino acids (L-Phe &gt; L-Met = L-Trp). In contrast, M2, M5 and M6 are highly specific for L-Arg, L-Thr, and L-Trp, respectively. Solely, M7 converted its preferred substrate (L-Phe) with a 15 000-fold reduced turnover rate compared to the most active module M6, indicating that its A domain cannot contribute to the malpinin biosynthesis due to low activity. Since the last T domain in malA is apparently not loaded with an amino acid, either the TE domain must offload the oligopeptide from the preceding T domain or the dual E/C domain of M7 must transfer the final peptide chain to the free acceptor T domain of M7 prior to release. The polypeptide is Malpinin synthetase (Mortierella alpina (Oleaginous fungus)).